Consider the following 197-residue polypeptide: Xanthine phosphoribosyltransferase (197 aa).

Xanthine is bound by residues L20 and T27. A 5-phospho-alpha-D-ribose 1-diphosphate-binding site is contributed by 128 to 132 (ANGQA). K156 is a xanthine binding site.

Belongs to the purine/pyrimidine phosphoribosyltransferase family. Xpt subfamily. As to quaternary structure, homodimer.

It is found in the cytoplasm. It carries out the reaction XMP + diphosphate = xanthine + 5-phospho-alpha-D-ribose 1-diphosphate. The protein operates within purine metabolism; XMP biosynthesis via salvage pathway; XMP from xanthine: step 1/1. Converts the preformed base xanthine, a product of nucleic acid breakdown, to xanthosine 5'-monophosphate (XMP), so it can be reused for RNA or DNA synthesis. The sequence is that of Xanthine phosphoribosyltransferase from Lactococcus lactis subsp. cremoris (strain SK11).